The following is a 1338-amino-acid chain: Vascular endothelial growth factor receptor 1 (1338 aa).

The N-terminal stretch at 1-26 (MVSYWDTGVLLCALLSCLLLTGSSSG) is a signal peptide. At 27-758 (SKLKDPELSL…QGTSDKSNLE (732 aa)) the chain is on the extracellular side. 7 consecutive Ig-like C2-type domains span residues 32 to 123 (PELS…TESA), 151 to 214 (GREL…VNGH), 230 to 327 (IDVQ…TSVH), 335 to 421 (TVKH…LTAT), 428 to 553 (PQIY…FYIT), 556 to 654 (PNGF…KEIT), and 661 to 747 (PYLL…AYLT). Cystine bridges form between C53–C107 and C158–C207. Residues N100, N164, N196, and N251 are each glycosylated (N-linked (GlcNAc...) asparagine). Residues C252 and C311 are joined by a disulfide bond. N-linked (GlcNAc...) asparagine glycans are attached at residues N323, N402, N417, N474, N547, N597, N620, N625, and N666. C454 and C535 form a disulfide bridge. C577 and C636 are disulfide-bonded. Cysteines 682 and 731 form a disulfide. The chain crosses the membrane as a helical span at residues 759-780 (LITLTCTCVAATLFWLLLTLFI). Residues 781–1338 (RKMKRSSSEI…SVVLYSTPPI (558 aa)) lie on the Cytoplasmic side of the membrane. The region spanning 827-1158 (LKLGKSLGRG…ELVEKLGDLL (332 aa)) is the Protein kinase domain. Residues 833-841 (LGRGAFGKV) and K861 each bind ATP. Y914 carries the phosphotyrosine; by autocatalysis modification. Positions 940–957 (PKKEKMEPGLEQGKKPRL) are enriched in basic and acidic residues. A disordered region spans residues 940–982 (PKKEKMEPGLEQGKKPRLDSVTSSESFASSGFQEDKSLSDVEE). Over residues 959-971 (SVTSSESFASSGF) the composition is skewed to polar residues. D1022 acts as the Proton acceptor in catalysis. 7 positions are modified to phosphotyrosine; by autocatalysis: Y1053, Y1169, Y1213, Y1242, Y1309, Y1327, and Y1333.

This sequence belongs to the protein kinase superfamily. Tyr protein kinase family. CSF-1/PDGF receptor subfamily. In terms of assembly, interacts with VEGFA, VEGFB and PGF. Monomer in the absence of bound VEGFA, VEGFB or PGF. Homodimer in the presence of bound VEGFA, VEGFB and PGF. Can also form a heterodimer with KDR. Interacts (when tyrosine phosphorylated) with CBL, CRK, GRB2, NCK1, PIK3R1, PLCG, PSEN1 and PTPN11. Probably also interacts with PTPRB. Interacts with RACK1. Identified in a complex with CBL and CD2AP. N-glycosylated. Post-translationally, ubiquitinated after VEGFA-mediated autophosphorylation, leading to proteolytic degradation. In terms of processing, autophosphorylated on tyrosine residues upon ligand binding. Autophosphorylation occurs in trans, i.e. one subunit of the dimeric receptor phosphorylates tyrosine residues on the other subunit. Phosphorylation at Tyr-1169 is important for interaction with PLCG. Phosphorylation at Tyr-1213 is important for interaction with PIK3R1, PTPN11, GRB2, and PLCG. Phosphorylation at Tyr-1333 is important for endocytosis and for interaction with CBL, NCK1 and CRK. Is probably dephosphorylated by PTPRB. Detected in normal lung, but also in placenta, liver, kidney, heart and brain tissues. Specifically expressed in most of the vascular endothelial cells, and also expressed in peripheral blood monocytes. Isoform 2 is strongly expressed in placenta. Isoform 3 is expressed in corneal epithelial cells (at protein level). Isoform 3 is expressed in vascular smooth muscle cells (VSMC).

It is found in the cell membrane. The protein localises to the endosome. Its subcellular location is the secreted. The protein resides in the cytoplasm. The enzyme catalyses L-tyrosyl-[protein] + ATP = O-phospho-L-tyrosyl-[protein] + ADP + H(+). Its activity is regulated as follows. Present in an inactive conformation in the absence of bound ligand. Binding of VEGFA, VEGFB or PGF leads to dimerization and activation by autophosphorylation on tyrosine residues. Tyrosine-protein kinase that acts as a cell-surface receptor for VEGFA, VEGFB and PGF, and plays an essential role in the development of embryonic vasculature, the regulation of angiogenesis, cell survival, cell migration, macrophage function, chemotaxis, and cancer cell invasion. Acts as a positive regulator of postnatal retinal hyaloid vessel regression. May play an essential role as a negative regulator of embryonic angiogenesis by inhibiting excessive proliferation of endothelial cells. Can promote endothelial cell proliferation, survival and angiogenesis in adulthood. Its function in promoting cell proliferation seems to be cell-type specific. Promotes PGF-mediated proliferation of endothelial cells, proliferation of some types of cancer cells, but does not promote proliferation of normal fibroblasts (in vitro). Has very high affinity for VEGFA and relatively low protein kinase activity; may function as a negative regulator of VEGFA signaling by limiting the amount of free VEGFA and preventing its binding to KDR. Modulates KDR signaling by forming heterodimers with KDR. Ligand binding leads to the activation of several signaling cascades. Activation of PLCG leads to the production of the cellular signaling molecules diacylglycerol and inositol 1,4,5-trisphosphate and the activation of protein kinase C. Mediates phosphorylation of PIK3R1, the regulatory subunit of phosphatidylinositol 3-kinase, leading to activation of phosphatidylinositol kinase and the downstream signaling pathway. Mediates activation of MAPK1/ERK2, MAPK3/ERK1 and the MAP kinase signaling pathway, as well as of the AKT1 signaling pathway. Phosphorylates SRC and YES1, and may also phosphorylate CBL. Promotes phosphorylation of AKT1 at 'Ser-473'. Promotes phosphorylation of PTK2/FAK1. Its function is as follows. Phosphorylates PLCG. Functionally, may function as decoy receptor for VEGFA. In terms of biological role, has a truncated kinase domain; it increases phosphorylation of SRC at 'Tyr-418' by unknown means and promotes tumor cell invasion. The protein is Vascular endothelial growth factor receptor 1 (FLT1) of Homo sapiens (Human).